Reading from the N-terminus, the 746-residue chain is Ribosome biogenesis protein BOP1 (746 aa).

The interval 1–116 (MAGSRGAGRT…PCPRTEMASA (116 aa)) is disordered. Over residues 43–65 (SHSTGSDSGVSDSEESVFSGLED) the composition is skewed to low complexity. A compositionally biased stretch (acidic residues) spans 66–87 (SGSDSSEDDDEGDEEGEDGALD). A compositionally biased stretch (basic and acidic residues) spans 88–99 (DEGHSGIKKTTE). Thr-106 bears the Phosphothreonine mark. Tyr-122 is modified (phosphotyrosine). Phosphoserine is present on residues Ser-126 and Ser-127. The sufficient for nucleolar localization stretch occupies residues 265–427 (MGWIQPRRPR…CLSVSPGGQW (163 aa)). 7 WD repeats span residues 411–450 (GHSD…CVRT), 452–492 (PVGG…RLVA), 532–576 (CHGK…SPFR), 577–615 (RSHG…LTKK), 618–657 (PNCK…KPYR), 661–700 (HHKK…DLLQ), and 716–746 (TRDL…RLFT).

This sequence belongs to the WD repeat BOP1/ERB1 family. In terms of assembly, component of the PeBoW complex, composed of BOP1, PES1 and WDR12. The complex is held together by BOP1, which interacts with PES1 via its N-terminal domain and with WDR12 via a high-affinity interaction between the seven-bladed beta-propeller domains of the 2 proteins. The NOP7 complex associates with the 66S pre-ribosome. The PeBoW complex associates with DDX27, BOP1 interacts directly with DDX27.

Its subcellular location is the nucleus. It localises to the nucleolus. The protein localises to the nucleoplasm. Functionally, component of the PeBoW complex, which is required for maturation of 28S and 5.8S ribosomal RNAs and formation of the 60S ribosome. The chain is Ribosome biogenesis protein BOP1 from Homo sapiens (Human).